The sequence spans 215 residues: Pyrrolidone-carboxylate peptidase (215 aa).

Active-site residues include Glu80, Cys143, and His167.

The protein belongs to the peptidase C15 family. Homotetramer.

Its subcellular location is the cytoplasm. The catalysed reaction is Release of an N-terminal pyroglutamyl group from a polypeptide, the second amino acid generally not being Pro.. Functionally, removes 5-oxoproline from various penultimate amino acid residues except L-proline. This chain is Pyrrolidone-carboxylate peptidase, found in Bacillus cereus (strain ZK / E33L).